Consider the following 449-residue polypeptide: Signal recognition particle protein (449 aa).

GTP contacts are provided by residues 109 to 116 (GLQGGGKT), 191 to 195 (DTAGR), and 249 to 252 (SRID).

It belongs to the GTP-binding SRP family. SRP54 subfamily. In terms of assembly, part of the signal recognition particle protein translocation system, which is composed of SRP and FtsY. SRP is a ribonucleoprotein composed of Ffh and a 4.5S RNA molecule.

It is found in the cytoplasm. It carries out the reaction GTP + H2O = GDP + phosphate + H(+). Involved in targeting and insertion of nascent membrane proteins into the cytoplasmic membrane. Binds to the hydrophobic signal sequence of the ribosome-nascent chain (RNC) as it emerges from the ribosomes. The SRP-RNC complex is then targeted to the cytoplasmic membrane where it interacts with the SRP receptor FtsY. Interaction with FtsY leads to the transfer of the RNC complex to the Sec translocase for insertion into the membrane, the hydrolysis of GTP by both Ffh and FtsY, and the dissociation of the SRP-FtsY complex into the individual components. This chain is Signal recognition particle protein, found in Rickettsia prowazekii (strain Madrid E).